The sequence spans 130 residues: Small ribosomal subunit protein uS9 (130 aa).

The protein belongs to the universal ribosomal protein uS9 family.

In Bacillus velezensis (strain DSM 23117 / BGSC 10A6 / LMG 26770 / FZB42) (Bacillus amyloliquefaciens subsp. plantarum), this protein is Small ribosomal subunit protein uS9.